A 600-amino-acid chain; its full sequence is Proline--tRNA ligase (600 aa).

The protein belongs to the class-II aminoacyl-tRNA synthetase family. ProS type 1 subfamily. In terms of assembly, homodimer.

The protein localises to the cytoplasm. The catalysed reaction is tRNA(Pro) + L-proline + ATP = L-prolyl-tRNA(Pro) + AMP + diphosphate. Its function is as follows. Catalyzes the attachment of proline to tRNA(Pro) in a two-step reaction: proline is first activated by ATP to form Pro-AMP and then transferred to the acceptor end of tRNA(Pro). As ProRS can inadvertently accommodate and process non-cognate amino acids such as alanine and cysteine, to avoid such errors it has two additional distinct editing activities against alanine. One activity is designated as 'pretransfer' editing and involves the tRNA(Pro)-independent hydrolysis of activated Ala-AMP. The other activity is designated 'posttransfer' editing and involves deacylation of mischarged Ala-tRNA(Pro). The misacylated Cys-tRNA(Pro) is not edited by ProRS. The sequence is that of Proline--tRNA ligase from Gloeothece citriformis (strain PCC 7424) (Cyanothece sp. (strain PCC 7424)).